Reading from the N-terminus, the 844-residue chain is Penicillin-binding protein 1B (844 aa).

The span at 1–10 (MAGNDREPIG) shows a compositional bias: basic and acidic residues. Residues 1–60 (MAGNDREPIGRKGKPTRPVKQKVSRRRYEDDDDYDDYDDYEDEEPMPRKGKGKGKGRKPR) form a disordered region. Residues 1 to 63 (MAGNDREPIG…GKGRKPRGKR (63 aa)) lie on the Cytoplasmic side of the membrane. Positions 11–25 (RKGKPTRPVKQKVSR) are enriched in basic residues. A compositionally biased stretch (acidic residues) spans 30–44 (DDDDYDDYDDYEDEE). Residues 48–60 (RKGKGKGKGRKPR) show a composition bias toward basic residues. A helical; Signal-anchor for type II membrane protein membrane pass occupies residues 64–87 (GWLWLLLKLAIVFAVLIAIYGVYL). Positions 88 to 250 (DQKIRSRIDG…DGISLYSIGR (163 aa)) are membrane association. Over 88–844 (DQKIRSRIDG…GWIKDMFGSN (757 aa)) the chain is Periplasmic. The tract at residues 109-200 (RMVNLEPDMT…QFGFFRLDPR (92 aa)) is uvrB domain 2 homolog. A transglycosylase region spans residues 195-367 (FRLDPRLITM…SIYNPWRNPK (173 aa)). Residue Glu-233 is the Proton donor; for transglycosylase activity of the active site. A transpeptidase region spans residues 444 to 736 (SVAQDAAEKA…NNQPTKLYGA (293 aa)). Ser-510 (acyl-ester intermediate; for transpeptidase activity) is an active-site residue. The span at 793 to 825 (LCQQSEMQQQPSGNPFDQSSQPQQQPQQQPAQQ) shows a compositional bias: low complexity. The interval 793–835 (LCQQSEMQQQPSGNPFDQSSQPQQQPQQQPAQQEQKDSDGVAG) is disordered.

It in the N-terminal section; belongs to the glycosyltransferase 51 family. This sequence in the C-terminal section; belongs to the transpeptidase family. In terms of assembly, forms a trimeric complex with MipA and MltA. Has also been shown to exist as monomer or homodimer; homodimer of Alpha and Gamma isozymes can be found. Interacts with UvrA, FtsL and FtsN.

It localises to the cell inner membrane. The enzyme catalyses [GlcNAc-(1-&gt;4)-Mur2Ac(oyl-L-Ala-gamma-D-Glu-L-Lys-D-Ala-D-Ala)](n)-di-trans,octa-cis-undecaprenyl diphosphate + beta-D-GlcNAc-(1-&gt;4)-Mur2Ac(oyl-L-Ala-gamma-D-Glu-L-Lys-D-Ala-D-Ala)-di-trans,octa-cis-undecaprenyl diphosphate = [GlcNAc-(1-&gt;4)-Mur2Ac(oyl-L-Ala-gamma-D-Glu-L-Lys-D-Ala-D-Ala)](n+1)-di-trans,octa-cis-undecaprenyl diphosphate + di-trans,octa-cis-undecaprenyl diphosphate + H(+). The catalysed reaction is Preferential cleavage: (Ac)2-L-Lys-D-Ala-|-D-Ala. Also transpeptidation of peptidyl-alanyl moieties that are N-acyl substituents of D-alanine.. It participates in cell wall biogenesis; peptidoglycan biosynthesis. Its function is as follows. Cell wall formation. Synthesis of cross-linked peptidoglycan from the lipid intermediates. The enzyme has a penicillin-insensitive transglycosylase N-terminal domain (formation of linear glycan strands) and a penicillin-sensitive transpeptidase C-terminal domain (cross-linking of the peptide subunits). This is Penicillin-binding protein 1B (mrcB) from Escherichia coli (strain K12).